Here is a 436-residue protein sequence, read N- to C-terminus: Adenylosuccinate synthetase (436 aa).

Residues 12-18 (GDEGKGK) and 40-42 (GHT) each bind GTP. Catalysis depends on aspartate 13, which acts as the Proton acceptor. Aspartate 13 and glycine 40 together coordinate Mg(2+). Residues 13–16 (DEGK), 38–41 (NAGH), threonine 128, arginine 142, glutamine 223, threonine 238, and arginine 302 contribute to the IMP site. The active-site Proton donor is histidine 41. Residue 298–304 (TTTGRRR) coordinates substrate. GTP contacts are provided by residues arginine 304, 330 to 332 (KLD), and 412 to 414 (SLG).

This sequence belongs to the adenylosuccinate synthetase family. As to quaternary structure, homodimer. It depends on Mg(2+) as a cofactor.

It localises to the cytoplasm. It catalyses the reaction IMP + L-aspartate + GTP = N(6)-(1,2-dicarboxyethyl)-AMP + GDP + phosphate + 2 H(+). It participates in purine metabolism; AMP biosynthesis via de novo pathway; AMP from IMP: step 1/2. Its function is as follows. Plays an important role in the de novo pathway of purine nucleotide biosynthesis. Catalyzes the first committed step in the biosynthesis of AMP from IMP. The protein is Adenylosuccinate synthetase of Prochlorococcus marinus subsp. pastoris (strain CCMP1986 / NIES-2087 / MED4).